Here is a 414-residue protein sequence, read N- to C-terminus: Esterase FrsA (414 aa).

It belongs to the FrsA family.

The catalysed reaction is a carboxylic ester + H2O = an alcohol + a carboxylate + H(+). In terms of biological role, catalyzes the hydrolysis of esters. This chain is Esterase FrsA, found in Shigella boydii serotype 18 (strain CDC 3083-94 / BS512).